The chain runs to 704 residues: ATP-dependent zinc metalloprotease FtsH (704 aa).

Residues 1–17 (MADSAKTPRGKKRRPFT) lie on the Cytoplasmic side of the membrane. Residues 18 to 38 (GLALWIIVALLLGMAMFSLFG) form a helical membrane-spanning segment. Topologically, residues 39 to 127 (RDGYQQIDTQ…DEIASSSWWS (89 aa)) are extracellular. Residues 128–148 (TLLLSFLPLLIFIGLFWFLIM) traverse the membrane as a helical segment. Residues 149-704 (NAQGGGKAMQ…GSAGTDGTGR (556 aa)) are Cytoplasmic-facing. 217–224 (GPPGTGKT) contributes to the ATP binding site. Position 439 (histidine 439) interacts with Zn(2+). Glutamate 440 is a catalytic residue. 2 residues coordinate Zn(2+): histidine 443 and aspartate 515. Positions 624–704 (PREVWISSTE…GSAGTDGTGR (81 aa)) are disordered. The span at 681–704 (PHGGEPGGGGYGYDGSAGTDGTGR) shows a compositional bias: gly residues.

This sequence in the central section; belongs to the AAA ATPase family. It in the C-terminal section; belongs to the peptidase M41 family. As to quaternary structure, homohexamer. Zn(2+) is required as a cofactor.

It is found in the cell membrane. Acts as a processive, ATP-dependent zinc metallopeptidase for both cytoplasmic and membrane proteins. Plays a role in the quality control of integral membrane proteins. In Brachybacterium faecium (strain ATCC 43885 / DSM 4810 / JCM 11609 / LMG 19847 / NBRC 14762 / NCIMB 9860 / 6-10), this protein is ATP-dependent zinc metalloprotease FtsH.